A 520-amino-acid chain; its full sequence is Peptide chain release factor 3 (520 aa).

The tr-type G domain maps to 8–277 (ESRKTFAIIS…HAPMPNARQT (270 aa)). Residues 17–24 (SHPDAGKT), 85–89 (DTPGH), and 139–142 (NKLD) contribute to the GTP site.

The protein belongs to the TRAFAC class translation factor GTPase superfamily. Classic translation factor GTPase family. PrfC subfamily.

The protein resides in the cytoplasm. Its function is as follows. Increases the formation of ribosomal termination complexes and stimulates activities of RF-1 and RF-2. It binds guanine nucleotides and has strong preference for UGA stop codons. It may interact directly with the ribosome. The stimulation of RF-1 and RF-2 is significantly reduced by GTP and GDP, but not by GMP. This chain is Peptide chain release factor 3, found in Staphylococcus epidermidis (strain ATCC 35984 / DSM 28319 / BCRC 17069 / CCUG 31568 / BM 3577 / RP62A).